We begin with the raw amino-acid sequence, 152 residues long: Protein IpgF (152 aa).

The N-terminal stretch at Met1–Arg17 is a signal peptide.

Belongs to the IagB/IpgF/P19 family.

The polypeptide is Protein IpgF (ipgF) (Shigella sonnei).